A 126-amino-acid polypeptide reads, in one-letter code: Gas vesicle protein J (126 aa).

Belongs to the gas vesicle GvpA family. As to quaternary structure, interacts with GvpA.

It localises to the gas vesicle. In terms of biological role, a minor component of the gas vesicle, might be involved in nucleating gas vesicle formation. Gas vesicles (GV) are hollow, gas filled proteinaceous nanostructures. During planktonic growth they allow positioning of the organism at a favorable depth for light or nutrient acquisition. In Pseudanabaena galeata (strain PCC 6901), this protein is Gas vesicle protein J.